The sequence spans 169 residues: Photosystem I assembly protein Ycf3 (169 aa).

3 TPR repeats span residues 35 to 68, 72 to 105, and 120 to 153; these read AFTY…ETDP, SYIL…NPSL, and GEQA…APGN.

Belongs to the Ycf3 family.

The protein localises to the plastid. It localises to the chloroplast thylakoid membrane. In terms of biological role, essential for the assembly of the photosystem I (PSI) complex. May act as a chaperone-like factor to guide the assembly of the PSI subunits. This Pinus koraiensis (Korean pine) protein is Photosystem I assembly protein Ycf3.